We begin with the raw amino-acid sequence, 266 residues long: MQSLIWASAIPLYITHSSSTIPYLINVPRVSYLALLFPRLTSFFGENVSSFSYEGILLKNLPVGLLCDLYQPELPWRIELGDGPLFDIHDTFINSVKEADFMRNGNAKGIMSMSKEHSTQLWNSVQDNDFSTYHKISTILLNPATALKHIPLRIYLPSSSTPSSTPHPGSSGSSKAPSTASPPSPLFTFKTIQTLIQPQTTSREPQTLGGALNSVLPTLFPSKRDAILAEVILHGATVPFKAVLEDLMREASYADGWLNVCVVMLN.

Residue lysine 97 forms a Glycyl lysine isopeptide (Lys-Gly) (interchain with G-Cter in atg12) linkage. Low complexity predominate over residues 158-179 (SSSTPSSTPHPGSSGSSKAPST). The disordered stretch occupies residues 158–182 (SSSTPSSTPHPGSSGSSKAPSTASP).

The protein belongs to the ATG5 family. As to quaternary structure, conjugated with atg12. Conjugated to atg12; which is essential for autophagy.

The protein localises to the preautophagosomal structure membrane. Functionally, involved in cytoplasm to vacuole transport (Cvt) and autophagic vesicle formation. Autophagy is essential for maintenance of amino acid levels and protein synthesis under nitrogen starvation. Required for selective autophagic degradation of the nucleus (nucleophagy). Also required for mitophagy, which eliminates defective or superfluous mitochondria in order to fulfill cellular energy requirements and prevent excess ROS production. Conjugation with atg12, through a ubiquitin-like conjugating system involving atg7 as an E1-like activating enzyme and atg10 as an E2-like conjugating enzyme, is essential for its function. The atg12-atg5 conjugate acts as an E3-like enzyme which is required for lipidation of atg8 and atg8 association to the vesicle membranes. In Sclerotinia sclerotiorum (strain ATCC 18683 / 1980 / Ss-1) (White mold), this protein is Autophagy protein 5 (atg5).